A 601-amino-acid polypeptide reads, in one-letter code: MSTISIHHVGILRNPLHSKSKRASINKPWSLSLPRSSSASRLVEPCRVSSKTDTKPAEITRRSGNYEPSLWDFDFIQSLDNHHPYVKEEQLKREEELIVQVKILLGTKMEAVKQLELIDDLKNLGLSYFFRDEIKTILTSIYNNSFENKNNQVGDLYFTSLGFRLLRQHGFNVSQDIFDCFKNEKGSDFDETLIGEDTKATLQLYEASFHLREGENTLELARQISTKYLQKKVNEGRISDENLSSWIRHSLDLPLHWRIQRLEARWFLDAYAVREDKNPLIFELAKLDFNIIQATQQEELKEVSRGWNDSCLAEKLPFVRDRVVESYFWGVGLFEGHEFGYQRKLTAANTLLISAIDDVYDVYGTLDELRLFTDVFRRWDTESIDQLPYYMQLCYLALYNYVSGVAYDILKDHRRNTIPYLQETWVELVEAYMKEAEWYKSGYTPSLEEYLTIAKISIASLTILLSVELSLPDSTIDRATFDRRHKMFYLSATVSRLADDLGTAPSELERGDVPKAIQCYMKDTNASEEEARGHVRFMIGETWKELNTAMAKPDDCPFTEQVVEATANLGRAAQFIYREGDGHGHFQIHQHMGNLFFHPYV.

A chloroplast-targeting transit peptide spans 1-47; the sequence is MSTISIHHVGILRNPLHSKSKRASINKPWSLSLPRSSSASRLVEPCR. Mn(2+) contacts are provided by Asp357 and Asp361. The DDXXD motif signature appears at 357-361; the sequence is DDVYD. 2 homodimerization regions span residues 363–369 and 435–471; these read YGTLDEL and EAEW…ELSL. Mn(2+) is bound by residues Asp499 and Glu507.

It belongs to the terpene synthase family. As to quaternary structure, homodimer. Requires Mn(2+) as cofactor. Mg(2+) is required as a cofactor.

The protein localises to the plastid. It localises to the chloroplast. The enzyme catalyses (2E)-geranyl diphosphate + H2O = (S)-alpha-terpineol + diphosphate. It carries out the reaction (2E)-geranyl diphosphate + H2O = (R)-alpha-terpineol + diphosphate. It functions in the pathway secondary metabolite biosynthesis; terpenoid biosynthesis. Its function is as follows. Involved in the biosynthesis of phenolic monoterpenes natural products. Monoterpene synthase which catalyzes the conversion of geranyl diphosphate (GPP) to alpha-terpineol (isomer is not determined). This chain is Alpha-terpineol synthase, chloroplastic, found in Thymus caespititius (Cretan thyme).